The primary structure comprises 503 residues: Glycerol kinase (503 aa).

Threonine 14 serves as a coordination point for ADP. Residues threonine 14, threonine 15, and serine 16 each coordinate ATP. Threonine 14 contributes to the sn-glycerol 3-phosphate binding site. Arginine 18 serves as a coordination point for ADP. Positions 84, 85, 136, and 246 each coordinate sn-glycerol 3-phosphate. 5 residues coordinate glycerol: arginine 84, glutamate 85, tyrosine 136, aspartate 246, and glutamine 247. ADP contacts are provided by threonine 268 and glycine 311. ATP contacts are provided by threonine 268, glycine 311, glutamine 315, and glycine 412. The ADP site is built by glycine 412 and asparagine 416.

This sequence belongs to the FGGY kinase family. Homotetramer and homodimer (in equilibrium). Heterodimer with EIIA-Glc. Binds 1 zinc ion per glycerol kinase EIIA-Glc dimer. The zinc ion is important for dimerization.

The catalysed reaction is glycerol + ATP = sn-glycerol 3-phosphate + ADP + H(+). It participates in polyol metabolism; glycerol degradation via glycerol kinase pathway; sn-glycerol 3-phosphate from glycerol: step 1/1. With respect to regulation, activity of this regulatory enzyme is affected by several metabolites. Allosterically and non-competitively inhibited by fructose 1,6-bisphosphate (FBP) and unphosphorylated phosphocarrier protein EIIA-Glc (III-Glc), an integral component of the bacterial phosphotransferase (PTS) system. In terms of biological role, key enzyme in the regulation of glycerol uptake and metabolism. Catalyzes the phosphorylation of glycerol to yield sn-glycerol 3-phosphate. In Klebsiella pneumoniae (strain 342), this protein is Glycerol kinase.